The following is a 664-amino-acid chain: Bifunctional polymyxin resistance protein ArnA (664 aa).

A formyltransferase ArnAFT region spans residues 1 to 308 (MSTKAVVFAY…EFGLVAGSQM (308 aa)). The active-site Proton donor; for formyltransferase activity is the His106. (6R)-10-formyltetrahydrofolate contacts are provided by residues Arg116 and 138-142 (VKRAD). A dehydrogenase ArnADH region spans residues 318–664 (RRTRVLILGV…EAMAEKADQC (347 aa)). NAD(+) is bound by residues Asp351 and 372-373 (DI). Residues Ala397, Tyr402, and 436 to 437 (TS) each bind UDP-alpha-D-glucuronate. Glu438 acts as the Proton acceptor; for decarboxylase activity in catalysis. UDP-alpha-D-glucuronate contacts are provided by residues Arg464, Asn495, 529-538 (RLVDGGAQKR), and Tyr616. Arg622 serves as the catalytic Proton donor; for decarboxylase activity.

It in the N-terminal section; belongs to the Fmt family. UDP-L-Ara4N formyltransferase subfamily. This sequence in the C-terminal section; belongs to the NAD(P)-dependent epimerase/dehydratase family. UDP-glucuronic acid decarboxylase subfamily. As to quaternary structure, homohexamer, formed by a dimer of trimers.

The enzyme catalyses UDP-alpha-D-glucuronate + NAD(+) = UDP-beta-L-threo-pentopyranos-4-ulose + CO2 + NADH. It carries out the reaction UDP-4-amino-4-deoxy-beta-L-arabinose + (6R)-10-formyltetrahydrofolate = UDP-4-deoxy-4-formamido-beta-L-arabinose + (6S)-5,6,7,8-tetrahydrofolate + H(+). The protein operates within nucleotide-sugar biosynthesis; UDP-4-deoxy-4-formamido-beta-L-arabinose biosynthesis; UDP-4-deoxy-4-formamido-beta-L-arabinose from UDP-alpha-D-glucuronate: step 1/3. It functions in the pathway nucleotide-sugar biosynthesis; UDP-4-deoxy-4-formamido-beta-L-arabinose biosynthesis; UDP-4-deoxy-4-formamido-beta-L-arabinose from UDP-alpha-D-glucuronate: step 3/3. Its pathway is bacterial outer membrane biogenesis; lipopolysaccharide biosynthesis. In terms of biological role, bifunctional enzyme that catalyzes the oxidative decarboxylation of UDP-glucuronic acid (UDP-GlcUA) to UDP-4-keto-arabinose (UDP-Ara4O) and the addition of a formyl group to UDP-4-amino-4-deoxy-L-arabinose (UDP-L-Ara4N) to form UDP-L-4-formamido-arabinose (UDP-L-Ara4FN). The modified arabinose is attached to lipid A and is required for resistance to polymyxin and cationic antimicrobial peptides. This is Bifunctional polymyxin resistance protein ArnA from Pseudomonas syringae pv. syringae (strain B728a).